The primary structure comprises 508 residues: Probable glycine dehydrogenase (decarboxylating) subunit 2 (508 aa).

The residue at position 277 (Lys277) is an N6-(pyridoxal phosphate)lysine.

This sequence belongs to the GcvP family. C-terminal subunit subfamily. The glycine cleavage system is composed of four proteins: P, T, L and H. In this organism, the P 'protein' is a heterodimer of two subunits. It depends on pyridoxal 5'-phosphate as a cofactor.

The enzyme catalyses N(6)-[(R)-lipoyl]-L-lysyl-[glycine-cleavage complex H protein] + glycine + H(+) = N(6)-[(R)-S(8)-aminomethyldihydrolipoyl]-L-lysyl-[glycine-cleavage complex H protein] + CO2. In terms of biological role, the glycine cleavage system catalyzes the degradation of glycine. The P protein binds the alpha-amino group of glycine through its pyridoxal phosphate cofactor; CO(2) is released and the remaining methylamine moiety is then transferred to the lipoamide cofactor of the H protein. This Saccharolobus solfataricus (strain ATCC 35092 / DSM 1617 / JCM 11322 / P2) (Sulfolobus solfataricus) protein is Probable glycine dehydrogenase (decarboxylating) subunit 2.